Consider the following 286-residue polypeptide: 3-hydroxybutyryl-CoA dehydrogenase (286 aa).

Belongs to the 3-hydroxyacyl-CoA dehydrogenase family.

The catalysed reaction is 3-hydroxybutanoyl-CoA + NAD(+) = acetoacetyl-CoA + NADH + H(+). The enzyme catalyses (3S)-3-hydroxybutanoyl-CoA + NADP(+) = acetoacetyl-CoA + NADPH + H(+). Its pathway is lipid metabolism; butanoate metabolism. The chain is 3-hydroxybutyryl-CoA dehydrogenase (fadB2) from Mycobacterium tuberculosis (strain CDC 1551 / Oshkosh).